The chain runs to 264 residues: NADH-quinone oxidoreductase subunit B 1 (264 aa).

[4Fe-4S] cluster is bound by residues Cys-42, Cys-43, Cys-108, and Cys-138.

This sequence belongs to the complex I 20 kDa subunit family. As to quaternary structure, NDH-1 is composed of 14 different subunits. Subunits NuoB, C, D, E, F, and G constitute the peripheral sector of the complex. The cofactor is [4Fe-4S] cluster.

The protein resides in the cell membrane. The enzyme catalyses a quinone + NADH + 5 H(+)(in) = a quinol + NAD(+) + 4 H(+)(out). In terms of biological role, NDH-1 shuttles electrons from NADH, via FMN and iron-sulfur (Fe-S) centers, to quinones in the respiratory chain. The immediate electron acceptor for the enzyme in this species is believed to be ubiquinone. Couples the redox reaction to proton translocation (for every two electrons transferred, four hydrogen ions are translocated across the cytoplasmic membrane), and thus conserves the redox energy in a proton gradient. In Chloroflexus aurantiacus (strain ATCC 29366 / DSM 635 / J-10-fl), this protein is NADH-quinone oxidoreductase subunit B 1.